The sequence spans 412 residues: Poly-beta-1,6-N-acetyl-D-glucosamine synthase (412 aa).

The next 4 helical transmembrane spans lie at 6-26 (FLLF…IYFY), 298-318 (IISI…FITA), 332-352 (IFLL…TVAL), and 366-386 (LIFV…VVLV).

The protein belongs to the glycosyltransferase 2 family.

The protein resides in the cell membrane. N-acetylglucosaminyltransferase that catalyzes the polymerization of single monomer units of UDP-N-acetylglucosamine to produce the linear homomer poly-beta-1,6-N-acetyl-D-glucosamine (PNAG, also referred to as PIA), a biofilm adhesin polysaccharide. Requires IcaD for full activity. This chain is Poly-beta-1,6-N-acetyl-D-glucosamine synthase (icaA), found in Staphylococcus aureus (strain NCTC 8325 / PS 47).